The primary structure comprises 262 residues: Hydroxyethylthiazole kinase (262 aa).

Met50 serves as a coordination point for substrate. ATP is bound by residues Arg125 and Thr171. Gly198 is a substrate binding site.

The protein belongs to the Thz kinase family. Mg(2+) serves as cofactor.

The enzyme catalyses 5-(2-hydroxyethyl)-4-methylthiazole + ATP = 4-methyl-5-(2-phosphooxyethyl)-thiazole + ADP + H(+). It functions in the pathway cofactor biosynthesis; thiamine diphosphate biosynthesis; 4-methyl-5-(2-phosphoethyl)-thiazole from 5-(2-hydroxyethyl)-4-methylthiazole: step 1/1. Functionally, catalyzes the phosphorylation of the hydroxyl group of 4-methyl-5-beta-hydroxyethylthiazole (THZ). This is Hydroxyethylthiazole kinase from Escherichia coli O157:H7.